The following is a 650-amino-acid chain: Hemocyanin subunit 2 (650 aa).

Residues S120 and S172 are each glycosylated (O-linked (GalNAc...) serine). The Cu cation site is built by H193, H197, and H225. The N-linked (GlcNAc...) asparagine glycan is linked to N309. Cu cation contacts are provided by H344, H348, and H384.

It belongs to the tyrosinase family. Hemocyanin subfamily. As to quaternary structure, hexamer of a number of different chains, of which five have been identified. Contains one N-glycosylated and three O-glycosylated residues. The position of one of the O-glycosylated residues has not been determined. Post-translationally, O-linked glycan at Ser-120 may be composed of two GalNAc, three Gal, and two N-acetylneuraminic acid units for a total 1525-Da MW. As to expression, hemolymph.

The protein localises to the secreted. It localises to the extracellular space. In terms of biological role, hemocyanins are copper-containing oxygen carriers occurring freely dissolved in the hemolymph of many mollusks and arthropods. This is Hemocyanin subunit 2 from Carcinus aestuarii (Green crab).